A 190-amino-acid polypeptide reads, in one-letter code: NADH-quinone oxidoreductase subunit B (190 aa).

Positions 39, 40, 104, and 135 each coordinate [4Fe-4S] cluster.

This sequence belongs to the complex I 20 kDa subunit family. In terms of assembly, NDH-1 is composed of 14 different subunits. Subunits NuoB, C, D, E, F, and G constitute the peripheral sector of the complex. Requires [4Fe-4S] cluster as cofactor.

The protein resides in the cell inner membrane. It catalyses the reaction a quinone + NADH + 5 H(+)(in) = a quinol + NAD(+) + 4 H(+)(out). Its function is as follows. NDH-1 shuttles electrons from NADH, via FMN and iron-sulfur (Fe-S) centers, to quinones in the respiratory chain. The immediate electron acceptor for the enzyme in this species is believed to be a menaquinone. Couples the redox reaction to proton translocation (for every two electrons transferred, four hydrogen ions are translocated across the cytoplasmic membrane), and thus conserves the redox energy in a proton gradient. This chain is NADH-quinone oxidoreductase subunit B, found in Chlorobium phaeobacteroides (strain BS1).